The following is a 427-amino-acid chain: MSGVIVVGSQWGDEGKGKIVDFFAEHADAVVRYQGGNNAGHTIWHGNTKFELSALPSGILTEGQLAVIGNGVVVNPEALLAEIAEVQSQGIAIDNLRISNRAHVIMPYHIALDKAAESSTNNRIGTTKKGIGPAYTDKISRVGIRVADLVDPDVFAKLLKEYLPFKNAQLTKLYNEEALNYDDIYETYVEYGRQLAPYVTDTSYLLGQMIANKKRVVFEGAQGIMLDVDHGTYPYVTSSNPTAGGVMNGAGVGPKQIQDVVGVIKAYTSRVGEGPFPTELHDDIADHIREVGHEYGVVTKRPRRIGWLDAVALRHAVQVSGLTKLAINSLDVLTGLKTLKIATSYTYKGEEIHHFPASDTWFEGLDVNFETLPGWDEDITGVQSFDELPANAQNYLKRISDLLSVDLLSFAVGPKPEETHLLSDVWQ.

GTP-binding positions include 12-18 and 40-42; these read GDEGKGK and GHT. Catalysis depends on Asp13, which acts as the Proton acceptor. Mg(2+) contacts are provided by Asp13 and Gly40. IMP contacts are provided by residues 13-16, 38-41, Thr127, Arg141, Gln222, Thr237, and Arg301; these read DEGK and NAGH. The active-site Proton donor is the His41. A substrate-binding site is contributed by 297–303; it reads VVTKRPR. GTP-binding positions include Arg303, 329–331, and 411–413; these read SLD and AVG.

Belongs to the adenylosuccinate synthetase family. Homodimer. Requires Mg(2+) as cofactor.

It localises to the cytoplasm. It catalyses the reaction IMP + L-aspartate + GTP = N(6)-(1,2-dicarboxyethyl)-AMP + GDP + phosphate + 2 H(+). The protein operates within purine metabolism; AMP biosynthesis via de novo pathway; AMP from IMP: step 1/2. In terms of biological role, plays an important role in the de novo pathway of purine nucleotide biosynthesis. Catalyzes the first committed step in the biosynthesis of AMP from IMP. The protein is Adenylosuccinate synthetase of Leuconostoc citreum (strain KM20).